Reading from the N-terminus, the 336-residue chain is Ketol-acid reductoisomerase (NADP(+)) 1 (336 aa).

Residues 2–181 (AKVYYEKDVT…GATRAGVLET (180 aa)) form the KARI N-terminal Rossmann domain. NADP(+) contacts are provided by residues 25 to 28 (YGSQ), Arg48, Ser52, and 82 to 85 (DELQ). Residue His107 is part of the active site. Gly133 serves as a coordination point for NADP(+). The KARI C-terminal knotted domain occupies 182-327 (TFKEETETDL…RKLREMMPFV (146 aa)). Mg(2+) is bound by residues Asp190, Glu194, Glu226, and Glu230. Residue Ser251 participates in substrate binding.

The protein belongs to the ketol-acid reductoisomerase family. It depends on Mg(2+) as a cofactor.

It catalyses the reaction (2R)-2,3-dihydroxy-3-methylbutanoate + NADP(+) = (2S)-2-acetolactate + NADPH + H(+). The enzyme catalyses (2R,3R)-2,3-dihydroxy-3-methylpentanoate + NADP(+) = (S)-2-ethyl-2-hydroxy-3-oxobutanoate + NADPH + H(+). Its pathway is amino-acid biosynthesis; L-isoleucine biosynthesis; L-isoleucine from 2-oxobutanoate: step 2/4. It participates in amino-acid biosynthesis; L-valine biosynthesis; L-valine from pyruvate: step 2/4. Involved in the biosynthesis of branched-chain amino acids (BCAA). Catalyzes an alkyl-migration followed by a ketol-acid reduction of (S)-2-acetolactate (S2AL) to yield (R)-2,3-dihydroxy-isovalerate. In the isomerase reaction, S2AL is rearranged via a Mg-dependent methyl migration to produce 3-hydroxy-3-methyl-2-ketobutyrate (HMKB). In the reductase reaction, this 2-ketoacid undergoes a metal-dependent reduction by NADPH to yield (R)-2,3-dihydroxy-isovalerate. This Bacillus cereus (strain ATCC 10987 / NRS 248) protein is Ketol-acid reductoisomerase (NADP(+)) 1.